A 499-amino-acid chain; its full sequence is Potassium channel subfamily K member 5 (499 aa).

The Cytoplasmic segment spans residues 1-7 (MVDRGPL). Residues 8–26 (LTSAIIFYLAIGAAIFEVL) traverse the membrane as a helical segment. Asparagine 77 carries N-linked (GlcNAc...) asparagine glycosylation. The pore-forming intramembrane region spans 85–112 (WPNAMIFAATVITTIGYGNVAPKTPAGR). K(+) contacts are provided by threonine 98, isoleucine 99, glycine 100, and tyrosine 101. Residues 98 to 103 (TIGYGN) are selectivity filter 1. A helical transmembrane segment spans residues 113–133 (LFCVFYGLFGVPLCLTWISAL). The Cytoplasmic segment spans residues 134–157 (GKFFGGRAKRLGQFLTKRGVSLRK). Residues 158–180 (AQITCTVIFIVWGVLVHLVIPPF) form a helical membrane-spanning segment. An intramembrane region (pore-forming) is located at residues 190–215 (YIEGLYYSFITISTIGFGDFVAGVNP). Threonine 203, isoleucine 204, glycine 205, and phenylalanine 206 together coordinate K(+). The tract at residues 203 to 208 (TIGFGD) is selectivity filter 2. A helical membrane pass occupies residues 230–250 (WIYLGLAWLSLFVNWKVSMFV). At 251-325 (EVHKAIKKRR…SGGGETGPGP (75 aa)) the chain is on the cytoplasmic side. Disordered stretches follow at residues 312 to 335 (AMKT…GGLP), 360 to 388 (QTLR…SPAP), and 428 to 499 (GLSD…PKGT). Gly residues predominate over residues 316 to 334 (SGGGETGPGPGLGPQGGGL). Basic and acidic residues predominate over residues 370 to 382 (RSPDEEAVARAPE). Residue serine 371 is modified to Phosphoserine. A compositionally biased stretch (low complexity) spans 466–480 (SSSESTFTSTESELS).

This sequence belongs to the two pore domain potassium channel (TC 1.A.1.8) family. Homodimer; disulfide-linked. Heterodimer with KCNK16 and KCNK17. Abundant expression in kidney, also detected in liver, placenta and small intestine. In the kidney, expression is restricted to the distal tubules and collecting ducts. Not expressed in proximal tubules or glomeruli. Expressed in pancreas, in both endocrine (alpha, beta, gamma, delta, and epsilon) and exocrine (acinar and ductal) cells.

It localises to the membrane. It carries out the reaction K(+)(in) = K(+)(out). The channel conductance is stimulated by extracellular alkaline pH. Inhibited by quinine, quinidine and external acidification. In terms of biological role, k(+) channel that conducts voltage-dependent outward rectifying currents upon membrane depolarization. Voltage sensing is coupled to K(+) electrochemical gradient in an 'ion flux gating' mode where outward but not inward ion flow opens the gate. Homo- and heterodimerizes to form functional channels with distinct regulatory and gating properties. The sequence is that of Potassium channel subfamily K member 5 from Homo sapiens (Human).